The sequence spans 833 residues: Coiled-coil domain-containing protein 110 (833 aa).

A coiled-coil region spans residues 431 to 778; sequence LQNYLKESVQ…REYLNLSDKI (348 aa).

It localises to the nucleus. In Macaca fascicularis (Crab-eating macaque), this protein is Coiled-coil domain-containing protein 110 (CCDC110).